Reading from the N-terminus, the 38-residue chain is 4 kDa defensin (38 aa).

Intrachain disulfides connect cysteine 4–cysteine 25, cysteine 11–cysteine 33, and cysteine 15–cysteine 35.

Belongs to the invertebrate defensin family. Type 2 subfamily.

The protein localises to the secreted. In terms of biological role, dual-function peptide with antimicrobial and potassium channel-blocking activities. Shows inhibitory activity against Gram-positive bacteria such as M.luteus, S.aureus, B.subtilis, and M.luteus as well as methicillin-resistant S.aureus (MIC=0.1-20 uM). Does not act on bacteria by disrupting membranes. Also moderately inhibits Kv1.1/KCNA1, Kv1.2/KCNA2, and Kv1.3/KCNA3 potassium channels. Inhibits potassium channels by interacting with the pore region. Does not show hemolytic activity. The polypeptide is 4 kDa defensin (Leiurus hebraeus (Hebrew deathstalker scorpion)).